The chain runs to 236 residues: 3-deoxy-D-manno-octulosonic acid kinase (236 aa).

Residue Asp167 is part of the active site.

This sequence belongs to the protein kinase superfamily. KdkA/RfaP family.

The protein localises to the cell inner membrane. It catalyses the reaction an alpha-Kdo-(2-&gt;6)-lipid IVA + ATP = a 4-O-phospho-alpha-Kdo-(2-&gt;6)-lipid IVA + ADP + H(+). It participates in bacterial outer membrane biogenesis; LPS core biosynthesis. Functionally, catalyzes the ATP-dependent phosphorylation of the 3-deoxy-D-manno-octulosonic acid (Kdo) residue in Kdo-lipid IV(A) at the 4-OH position. The chain is 3-deoxy-D-manno-octulosonic acid kinase from Vibrio vulnificus (strain YJ016).